Here is a 510-residue protein sequence, read N- to C-terminus: ATP synthase subunit alpha (510 aa).

Glycine 169 to threonine 176 contributes to the ATP binding site.

Belongs to the ATPase alpha/beta chains family. In terms of assembly, F-type ATPases have 2 components, CF(1) - the catalytic core - and CF(0) - the membrane proton channel. CF(1) has five subunits: alpha(3), beta(3), gamma(1), delta(1), epsilon(1). CF(0) has three main subunits: a(1), b(2) and c(9-12). The alpha and beta chains form an alternating ring which encloses part of the gamma chain. CF(1) is attached to CF(0) by a central stalk formed by the gamma and epsilon chains, while a peripheral stalk is formed by the delta and b chains.

The protein localises to the cell inner membrane. It carries out the reaction ATP + H2O + 4 H(+)(in) = ADP + phosphate + 5 H(+)(out). Its function is as follows. Produces ATP from ADP in the presence of a proton gradient across the membrane. The alpha chain is a regulatory subunit. The sequence is that of ATP synthase subunit alpha from Rickettsia peacockii (strain Rustic).